Reading from the N-terminus, the 450-residue chain is LanC-like protein 2 (450 aa).

Glycine 2 carries the N-myristoyl glycine lipid modification. Residues 2 to 14 (GETMSKRLKFHLG) are interaction with inositol phospholipids. Residue tyrosine 198 is modified to Phosphotyrosine.

It belongs to the LanC-like protein family. Interacts with an array of inositol phospholipids such as phosphatidylinositol 3-phosphate (PI3P), phosphatidylinositol 4-phosphate (PI4P) and phosphatidylinositol 5-phosphate (PI5P). PIP-binding enhances membrane association. Post-translationally, myristoylated. Essential for membrane association.

The protein resides in the nucleus. Its subcellular location is the cytoplasm. It is found in the cell membrane. Necessary for abscisic acid (ABA) binding on the cell membrane and activation of the ABA signaling pathway in granulocytes. In Mus musculus (Mouse), this protein is LanC-like protein 2 (Lancl2).